The sequence spans 102 residues: UPF0213 protein in potE 3'region (102 aa).

The GIY-YIG domain maps to 6 to 81 (SPWHLYMLRL…KQLSKTQKER (76 aa)).

Belongs to the UPF0213 family.

The protein is UPF0213 protein in potE 3'region of Serratia liquefaciens.